Reading from the N-terminus, the 279-residue chain is Uroplakin-3b (279 aa).

Positions 1-26 (MGLPSRQPRLWLLLLVVLGWPQPCLT) are cleaved as a signal peptide. The Lumenal segment spans residues 27–200 (LDLIPYTPRI…DTWPGRRSGD (174 aa)). N77 is a glycosylation site (N-linked (GlcNAc...) asparagine). The helical transmembrane segment at 201-221 (MIIITSILSSLAGLLLLAFLA) threads the bilayer. Residues 222-279 (ASSVRFSSLWWPEEAPEQLRIGSFMGKRYMTHHIPPSEAATLPVGCEPGLERFPSLSP) lie on the Cytoplasmic side of the membrane.

Belongs to the uroplakin-3 family. As to quaternary structure, heterodimer with uroplakin-1B (UPK1B). Expression is urothelium-specific.

The protein localises to the cell membrane. Functionally, component of the asymmetric unit membrane (AUM); a highly specialized biomembrane elaborated by terminally differentiated urothelial cells. May play an important role in AUM-cytoskeleton interaction in terminally differentiated urothelial cells. It also contributes to the formation of urothelial glycocalyx which may play an important role in preventing bacterial adherence. In Bos taurus (Bovine), this protein is Uroplakin-3b (UPK3B).